We begin with the raw amino-acid sequence, 282 residues long: Transcription repressor OFP18 (282 aa).

The tract at residues 1 to 85 (MVRKMKLPFL…YSSFSSTSHA (85 aa)) is disordered. Residues 15–35 (SSSSFSSNSSSSSSSWPWPSS) are compositionally biased toward low complexity. Over residues 36-47 (HQQNLKTISSKA) the composition is skewed to polar residues. Residues 66–85 (SFSSSPSSSSYSSFSSTSHA) show a composition bias toward low complexity. The 61-residue stretch at 139–199 (LSLESNDPYT…FAAFVDLVLN (61 aa)) folds into the OVATE domain.

Expressed in roots and shoots.

The protein resides in the nucleus. Functionally, transcriptional repressor that regulates multiple aspects of plant growth and development through the regulation of BEL1-LIKE (BLH) and KNOX TALE (KNAT) homeodomain transcription factors. In Arabidopsis thaliana (Mouse-ear cress), this protein is Transcription repressor OFP18 (OFP18).